The sequence spans 675 residues: Methionine--tRNA ligase (675 aa).

The 'HIGH' region signature appears at 15–25; sequence PYANGSIHLGH. 4 residues coordinate Zn(2+): cysteine 146, cysteine 149, cysteine 159, and cysteine 162. The short motif at 332–336 is the 'KMSKS' region element; the sequence is KMSKS. Residue lysine 335 coordinates ATP. In terms of domain architecture, tRNA-binding spans 573–675; the sequence is DFAKVDMRIA…SGAQPGMQVK (103 aa).

It belongs to the class-I aminoacyl-tRNA synthetase family. MetG type 1 subfamily. As to quaternary structure, homodimer. Zn(2+) serves as cofactor.

Its subcellular location is the cytoplasm. The enzyme catalyses tRNA(Met) + L-methionine + ATP = L-methionyl-tRNA(Met) + AMP + diphosphate. Functionally, is required not only for elongation of protein synthesis but also for the initiation of all mRNA translation through initiator tRNA(fMet) aminoacylation. The sequence is that of Methionine--tRNA ligase from Yersinia pseudotuberculosis serotype O:1b (strain IP 31758).